A 329-amino-acid chain; its full sequence is Flotillin-like protein FloA (329 aa).

2 helical membrane-spanning segments follow: residues 6–26 (FIVI…FVPI) and 27–47 (GLWI…LVGM).

Belongs to the flotillin-like FloA family. As to quaternary structure, homooligomerizes.

The protein resides in the cell membrane. Its subcellular location is the membrane raft. Found in functional membrane microdomains (FMM) that may be equivalent to eukaryotic membrane rafts. FMMs are highly dynamic and increase in number as cells age. Flotillins are thought to be important factors in membrane fluidity. The polypeptide is Flotillin-like protein FloA (Staphylococcus aureus (strain USA300)).